The sequence spans 166 residues: Urease accessory protein UreE (166 aa).

The protein belongs to the UreE family.

The protein localises to the cytoplasm. Involved in urease metallocenter assembly. Binds nickel. Probably functions as a nickel donor during metallocenter assembly. This chain is Urease accessory protein UreE, found in Pseudomonas fluorescens (strain Pf0-1).